Here is a 297-residue protein sequence, read N- to C-terminus: uncharacterized protein (297 aa).

A run of 9 helical transmembrane segments spans residues 1–21 (MSWI…LGII), 32–52 (GSIL…IYVY), 72–92 (AMAL…NIPS), 98–118 (VLFF…YGGI), 120–140 (LIHK…ATGI), 194–214 (ILIE…IFAI), 218–238 (VYII…LFFC), 253–273 (LALI…IEIP), and 274–294 (AYIS…ASIL).

It belongs to the TerC family.

It is found in the cell membrane. This is an uncharacterized protein from Rickettsia prowazekii (strain Madrid E).